A 157-amino-acid chain; its full sequence is S-ribosylhomocysteine lyase (157 aa).

Fe cation is bound by residues H53, H57, and C124.

The protein belongs to the LuxS family. In terms of assembly, homodimer. Fe cation is required as a cofactor.

It carries out the reaction S-(5-deoxy-D-ribos-5-yl)-L-homocysteine = (S)-4,5-dihydroxypentane-2,3-dione + L-homocysteine. Its function is as follows. Involved in the synthesis of autoinducer 2 (AI-2) which is secreted by bacteria and is used to communicate both the cell density and the metabolic potential of the environment. The regulation of gene expression in response to changes in cell density is called quorum sensing. Catalyzes the transformation of S-ribosylhomocysteine (RHC) to homocysteine (HC) and 4,5-dihydroxy-2,3-pentadione (DPD). This chain is S-ribosylhomocysteine lyase, found in Borrelia garinii subsp. bavariensis (strain ATCC BAA-2496 / DSM 23469 / PBi) (Borreliella bavariensis).